A 245-amino-acid chain; its full sequence is Adenosylcobinamide-GDP ribazoletransferase (245 aa).

Helical transmembrane passes span 35 to 55 (WFPL…ALGL), 108 to 128 (IGAF…IGAH), 137 to 157 (GVLI…AALV), 176 to 196 (IAIG…TPAI), and 197 to 217 (TTVT…HLAR).

It belongs to the CobS family. Mg(2+) serves as cofactor.

The protein localises to the cell inner membrane. The catalysed reaction is alpha-ribazole + adenosylcob(III)inamide-GDP = adenosylcob(III)alamin + GMP + H(+). It catalyses the reaction alpha-ribazole 5'-phosphate + adenosylcob(III)inamide-GDP = adenosylcob(III)alamin 5'-phosphate + GMP + H(+). It functions in the pathway cofactor biosynthesis; adenosylcobalamin biosynthesis; adenosylcobalamin from cob(II)yrinate a,c-diamide: step 7/7. Its function is as follows. Joins adenosylcobinamide-GDP and alpha-ribazole to generate adenosylcobalamin (Ado-cobalamin). Also synthesizes adenosylcobalamin 5'-phosphate from adenosylcobinamide-GDP and alpha-ribazole 5'-phosphate. This is Adenosylcobinamide-GDP ribazoletransferase from Nitratidesulfovibrio vulgaris (strain ATCC 29579 / DSM 644 / CCUG 34227 / NCIMB 8303 / VKM B-1760 / Hildenborough) (Desulfovibrio vulgaris).